The following is a 195-amino-acid chain: MAKLDTAALNQLFTQARTRNGWSDQPIPEAVLRELYDLVKFGPTAANTTPARFVFVQSPEAKARLAALSSGSNGPKILQAPVTVIVGYDLDFPETLDKLFPNAPGAKNWFGDPVAKEVGALRNSSLQGGYFILAARALGLDVGPMSGFDNAGVDKEFFAGTNIKSNFIASIGYGTEEGLFPRNPRLDFEEAARII.

This sequence belongs to the nitroreductase family. HadB/RutE subfamily. It depends on FMN as a cofactor.

In Caulobacter sp. (strain K31), this protein is Putative NADH dehydrogenase/NAD(P)H nitroreductase Caul_0018.